A 500-amino-acid polypeptide reads, in one-letter code: Protein psiE (500 aa).

Residues M1–S18 form the signal peptide. N59 is a glycosylation site (N-linked (GlcNAc...) asparagine). A PA14 domain is found at T114 to D256. Residues N314, N341, N366, N420, and N469 are each glycosylated (N-linked (GlcNAc...) asparagine).

This sequence belongs to the prespore-cell-inducing factor family.

The protein resides in the secreted. The polypeptide is Protein psiE (psiE) (Dictyostelium discoideum (Social amoeba)).